We begin with the raw amino-acid sequence, 215 residues long: Adenylate kinase (215 aa).

10–15 (GAGKGT) lines the ATP pocket. The NMP stretch occupies residues 30 to 59 (STGDMFRAAMKNNTELGKKAKSFMDNGDLV). Residues Thr31, Arg36, 57 to 59 (DLV), 85 to 88 (GFPR), and Gln92 contribute to the AMP site. The interval 126–163 (GRWICRTCGKTYHEIYNPPKVPGKCDLDGGELYQREDD) is LID. ATP is bound at residue Arg127. Zn(2+) contacts are provided by Cys130 and Cys133. 136–137 (TY) is a binding site for ATP. Residues Cys150 and Asp153 each contribute to the Zn(2+) site. Residues Arg160 and Arg171 each contribute to the AMP site. An ATP-binding site is contributed by Gln199.

This sequence belongs to the adenylate kinase family. In terms of assembly, monomer.

The protein resides in the cytoplasm. It catalyses the reaction AMP + ATP = 2 ADP. The protein operates within purine metabolism; AMP biosynthesis via salvage pathway; AMP from ADP: step 1/1. Functionally, catalyzes the reversible transfer of the terminal phosphate group between ATP and AMP. Plays an important role in cellular energy homeostasis and in adenine nucleotide metabolism. In Listeria innocua serovar 6a (strain ATCC BAA-680 / CLIP 11262), this protein is Adenylate kinase.